The chain runs to 269 residues: Type II methyltransferase M2.LlaDCHI (269 aa).

This sequence belongs to the N(4)/N(6)-methyltransferase family.

It catalyses the reaction a 2'-deoxyadenosine in DNA + S-adenosyl-L-methionine = an N(6)-methyl-2'-deoxyadenosine in DNA + S-adenosyl-L-homocysteine + H(+). Functionally, a beta subtype methylase, recognizes the double-stranded sequence 5'-GATC-3', methylates A-2 on both strands, and protects the DNA from cleavage by the LlaDCHI endonuclease. The chain is Type II methyltransferase M2.LlaDCHI from Lactococcus lactis subsp. cremoris (Streptococcus cremoris).